Here is a 212-residue protein sequence, read N- to C-terminus: Uracil phosphoribosyltransferase (212 aa).

5-phospho-alpha-D-ribose 1-diphosphate contacts are provided by residues Arg78, Arg103, and 130–138 (DPMLATGSS). Residues Ile193 and 198 to 200 (GDA) contribute to the uracil site. Residue Asp199 participates in 5-phospho-alpha-D-ribose 1-diphosphate binding.

This sequence belongs to the UPRTase family. Mg(2+) is required as a cofactor.

The catalysed reaction is UMP + diphosphate = 5-phospho-alpha-D-ribose 1-diphosphate + uracil. It participates in pyrimidine metabolism; UMP biosynthesis via salvage pathway; UMP from uracil: step 1/1. Allosterically activated by GTP. Catalyzes the conversion of uracil and 5-phospho-alpha-D-ribose 1-diphosphate (PRPP) to UMP and diphosphate. This chain is Uracil phosphoribosyltransferase, found in Pseudomonas fluorescens (strain Pf0-1).